An 89-amino-acid chain; its full sequence is Small ribosomal subunit protein uS15 (89 aa).

The protein belongs to the universal ribosomal protein uS15 family. Part of the 30S ribosomal subunit. Forms a bridge to the 50S subunit in the 70S ribosome, contacting the 23S rRNA.

One of the primary rRNA binding proteins, it binds directly to 16S rRNA where it helps nucleate assembly of the platform of the 30S subunit by binding and bridging several RNA helices of the 16S rRNA. Functionally, forms an intersubunit bridge (bridge B4) with the 23S rRNA of the 50S subunit in the ribosome. This is Small ribosomal subunit protein uS15 from Parabacteroides distasonis (strain ATCC 8503 / DSM 20701 / CIP 104284 / JCM 5825 / NCTC 11152).